Here is a 369-residue protein sequence, read N- to C-terminus: 4-hydroxy-3-methylbut-2-en-1-yl diphosphate synthase (flavodoxin) (369 aa).

Cysteine 270, cysteine 273, cysteine 305, and glutamate 312 together coordinate [4Fe-4S] cluster.

Belongs to the IspG family. [4Fe-4S] cluster serves as cofactor.

The enzyme catalyses (2E)-4-hydroxy-3-methylbut-2-enyl diphosphate + oxidized [flavodoxin] + H2O + 2 H(+) = 2-C-methyl-D-erythritol 2,4-cyclic diphosphate + reduced [flavodoxin]. The protein operates within isoprenoid biosynthesis; isopentenyl diphosphate biosynthesis via DXP pathway; isopentenyl diphosphate from 1-deoxy-D-xylulose 5-phosphate: step 5/6. Converts 2C-methyl-D-erythritol 2,4-cyclodiphosphate (ME-2,4cPP) into 1-hydroxy-2-methyl-2-(E)-butenyl 4-diphosphate. This is 4-hydroxy-3-methylbut-2-en-1-yl diphosphate synthase (flavodoxin) from Pseudomonas fluorescens (strain SBW25).